Here is a 636-residue protein sequence, read N- to C-terminus: Translation factor GUF1, mitochondrial (636 aa).

The tr-type G domain maps to 35–218 (SNYRNFSIVA…AIIRDIPGPR (184 aa)). Residues 44–51 (AHVDHGKS), 111–115 (DTPGH), and 165–168 (NKID) contribute to the GTP site.

The protein belongs to the TRAFAC class translation factor GTPase superfamily. Classic translation factor GTPase family. LepA subfamily.

It is found in the mitochondrion inner membrane. The catalysed reaction is GTP + H2O = GDP + phosphate + H(+). Its function is as follows. Promotes mitochondrial protein synthesis. May act as a fidelity factor of the translation reaction, by catalyzing a one-codon backward translocation of tRNAs on improperly translocated ribosomes. Binds to mitochondrial ribosomes in a GTP-dependent manner. This Debaryomyces hansenii (strain ATCC 36239 / CBS 767 / BCRC 21394 / JCM 1990 / NBRC 0083 / IGC 2968) (Yeast) protein is Translation factor GUF1, mitochondrial.